Consider the following 134-residue polypeptide: UPF0412 protein YaaI (134 aa).

The first 23 residues, 1–23, serve as a signal peptide directing secretion; the sequence is MKSVITISASLAISLMLCCTAQA.

It belongs to the UPF0412 family.

This is UPF0412 protein YaaI from Escherichia coli O127:H6 (strain E2348/69 / EPEC).